Reading from the N-terminus, the 504-residue chain is D-alanine--D-alanyl carrier protein ligase (504 aa).

152-153 provides a ligand contact to ATP; it reads TS. A D-alanine-binding site is contributed by Asp197. Residue 292–297 participates in ATP binding; it reads NTYGPT. Position 301 (Val301) interacts with D-alanine. ATP contacts are provided by residues Asp383, 394–397, and Lys492; that span reads YNGR. Position 492 (Lys492) interacts with D-alanine.

Belongs to the ATP-dependent AMP-binding enzyme family. DltA subfamily.

The protein resides in the cytoplasm. The catalysed reaction is holo-[D-alanyl-carrier protein] + D-alanine + ATP = D-alanyl-[D-alanyl-carrier protein] + AMP + diphosphate. It participates in cell wall biogenesis; lipoteichoic acid biosynthesis. In terms of biological role, catalyzes the first step in the D-alanylation of lipoteichoic acid (LTA), the activation of D-alanine and its transfer onto the D-alanyl carrier protein (Dcp) DltC. In an ATP-dependent two-step reaction, forms a high energy D-alanyl-AMP intermediate, followed by transfer of the D-alanyl residue as a thiol ester to the phosphopantheinyl prosthetic group of the Dcp. D-alanylation of LTA plays an important role in modulating the properties of the cell wall in Gram-positive bacteria, influencing the net charge of the cell wall. This is D-alanine--D-alanyl carrier protein ligase from Bacillus cereus (strain AH187).